The sequence spans 189 residues: TATA-box-binding protein 1 (189 aa).

2 tandem repeats follow at residues 10–86 and 101–179.

The protein belongs to the TBP family.

Its function is as follows. General factor that plays a role in the activation of archaeal genes transcribed by RNA polymerase. Binds specifically to the TATA box promoter element which lies close to the position of transcription initiation. The chain is TATA-box-binding protein 1 (tbp1) from Haloferax volcanii (strain ATCC 29605 / DSM 3757 / JCM 8879 / NBRC 14742 / NCIMB 2012 / VKM B-1768 / DS2) (Halobacterium volcanii).